The sequence spans 486 residues: Ribulose bisphosphate carboxylase large chain 1 (486 aa).

Residues N125 and T175 each contribute to the substrate site. Catalysis depends on K177, which acts as the Proton acceptor. Position 179 (K179) interacts with substrate. Positions 203, 205, and 206 each coordinate Mg(2+). Position 203 is an N6-carboxylysine (K203). H295 serves as the catalytic Proton acceptor. R296, H328, and S380 together coordinate substrate.

This sequence belongs to the RuBisCO large chain family. Type I subfamily. Heterohexadecamer of 8 large chains and 8 small chains. The cofactor is Mg(2+).

The enzyme catalyses 2 (2R)-3-phosphoglycerate + 2 H(+) = D-ribulose 1,5-bisphosphate + CO2 + H2O. The catalysed reaction is D-ribulose 1,5-bisphosphate + O2 = 2-phosphoglycolate + (2R)-3-phosphoglycerate + 2 H(+). RuBisCO catalyzes two reactions: the carboxylation of D-ribulose 1,5-bisphosphate, the primary event in carbon dioxide fixation, as well as the oxidative fragmentation of the pentose substrate. Both reactions occur simultaneously and in competition at the same active site. This is Ribulose bisphosphate carboxylase large chain 1 from Bradyrhizobium sp. (strain ORS 278).